The following is a 1643-amino-acid chain: Lysine-specific demethylase 6B (1643 aa).

Disordered regions lie at residues 52–88 (GQPP…PLHG), 190–680 (AKRG…PLED), 704–807 (ESIR…LKSL), and 822–1096 (GAAV…RSLS). Composition is skewed to low complexity over residues 63-74 (SHGSSSGHPSKP) and 212-223 (AALSGPSGEEGL). A Phosphoserine modification is found at S224. A compositionally biased stretch (pro residues) spans 242-266 (PGLPLPPPPLPPPPPPPPPPPPPLP). Residues 291–307 (GPERKGSAPPERQEQRH) show a composition bias toward basic and acidic residues. Positions 332-342 (AAPPGPGPRPP) are enriched in pro residues. Residues 359 to 370 (DLRESRVQRSRM) show a composition bias toward basic and acidic residues. The span at 394-412 (PGTTTSSSSSSSSNTGLRG) shows a compositional bias: low complexity. A compositionally biased stretch (pro residues) spans 460–484 (SLPPGPSSPPPPPCPRLLRPPPPPA). The segment covering 550–569 (TTSSSNSNSGSHSSSPAGPV) has biased composition (low complexity). Composition is skewed to pro residues over residues 584–600 (LPRP…PPLV) and 641–658 (GPGP…PVPP). The segment covering 704-714 (ESIRKEEEQQQ) has biased composition (basic and acidic residues). The span at 740–764 (TAPTTTAPAVAVTTTTTTTTTTTAT) shows a compositional bias: low complexity. The segment covering 772–800 (PPALPPPPPLAKFPPPSQPQPPPPPPPSP) has biased composition (pro residues). Low complexity predominate over residues 843–877 (SGATALPPTSAAPSAQGSPQPSASSSSQFSTSGGP). A compositionally biased stretch (pro residues) spans 889-904 (VPGPMTPTQPPPPLSL). Positions 916–929 (EISRACETLVERVG) are enriched in basic and acidic residues. Basic residues predominate over residues 972-989 (CKRRQKEHQKEHRRHRRA). The span at 990–1003 (CKDSVGRRPREGRA) shows a compositional bias: basic and acidic residues. Basic residues predominate over residues 1004-1016 (KAKAKVPKEKSRR). A compositionally biased stretch (pro residues) spans 1047 to 1067 (PTAPAPPSAPAPSAQPTPPSA). K1109 participates in a covalent cross-link: Glycyl lysine isopeptide (Lys-Gly) (interchain with G-Cter in SUMO2). A disordered region spans residues 1288–1325 (FQESLQEEKESEDEESEEPDSTTGTPPSSAPDPKNHHI). A compositionally biased stretch (acidic residues) spans 1296-1307 (KESEDEESEEPD). Positions 1339 to 1502 (RWKPQLQELL…YQLALERYEW (164 aa)) constitute a JmjC domain. Fe cation-binding residues include H1390, E1392, and H1470. Zn(2+) contacts are provided by C1575, C1578, C1602, and C1605.

The protein belongs to the UTX family. As to quaternary structure, interacts with TLE1. Component of the MLL4 complex, at least composed of KMT2B/MLL4, ASH2L, RBBP5, WDR5, and KDM6B. Interacts with TBX21, SMARCA4, SMARCC1 and SMARCC2. Requires L-ascorbate as cofactor. Fe(2+) is required as a cofactor.

The protein resides in the nucleus. The catalysed reaction is N(6),N(6),N(6)-trimethyl-L-lysyl(27)-[histone H3] + 2 2-oxoglutarate + 2 O2 = N(6)-methyl-L-lysyl(27)-[histone H3] + 2 formaldehyde + 2 succinate + 2 CO2. Its function is as follows. Histone demethylase that specifically demethylates 'Lys-27' of histone H3, thereby playing a central role in histone code. Demethylates trimethylated and dimethylated H3 'Lys-27'. Plays a central role in regulation of posterior development, by regulating HOX gene expression. Involved in inflammatory response by participating in macrophage differentiation in case of inflammation by regulating gene expression and macrophage differentiation. Plays a demethylase-independent role in chromatin remodeling to regulate T-box family member-dependent gene expression by acting as a link between T-box factors and the SMARCA4-containing SWI/SNF remodeling complex. This Homo sapiens (Human) protein is Lysine-specific demethylase 6B (KDM6B).